Here is a 218-residue protein sequence, read N- to C-terminus: Small ribosomal subunit protein uS3c (218 aa).

Positions Val47–Ala118 constitute a KH type-2 domain.

It belongs to the universal ribosomal protein uS3 family. Part of the 30S ribosomal subunit.

It is found in the plastid. Its subcellular location is the chloroplast. This chain is Small ribosomal subunit protein uS3c (rps3), found in Solanum bulbocastanum (Wild potato).